The chain runs to 439 residues: AP-2 complex subunit mu (439 aa).

Residues 172 to 438 form the MHD domain; sequence RNELYIDVVE…LTKAGTYQNR (267 aa).

Belongs to the adaptor complexes medium subunit family. As to quaternary structure, adaptor protein complex 2 (AP-2) is a heterotetramer composed of two large adaptins (alpha-type and beta-type subunits), a medium adaptin (mu-type subunit AP50) and a small adaptin (sigma-type subunit AP17). Post-translationally, phosphorylated.

The protein resides in the cell membrane. It localises to the membrane. The protein localises to the coated pit. Component of the adaptor complexes which link clathrin to receptors in coated vesicles. Clathrin-associated protein complexes are believed to interact with the cytoplasmic tails of membrane proteins, leading to their selection and concentration. AP50 is a subunit of the plasma membrane adaptor. The sequence is that of AP-2 complex subunit mu (apm2) from Dictyostelium discoideum (Social amoeba).